The chain runs to 159 residues: Ribonuclease P protein component 2 (159 aa).

It belongs to the eukaryotic/archaeal RNase P protein component 2 family. In terms of assembly, consists of a catalytic RNA component and at least 4-5 protein subunits.

It is found in the cytoplasm. The catalysed reaction is Endonucleolytic cleavage of RNA, removing 5'-extranucleotides from tRNA precursor.. Its function is as follows. Part of ribonuclease P, a protein complex that generates mature tRNA molecules by cleaving their 5'-ends. The polypeptide is Ribonuclease P protein component 2 (Halorubrum lacusprofundi (strain ATCC 49239 / DSM 5036 / JCM 8891 / ACAM 34)).